Here is a 782-residue protein sequence, read N- to C-terminus: Probable methionine--tRNA ligase, cytoplasmic (782 aa).

Positions 231–241 (PYVNNVPHLGN) match the 'HIGH' region motif. A 'KMSKS' region motif is present at residues 551-555 (KFSKS).

Belongs to the class-I aminoacyl-tRNA synthetase family.

The protein resides in the cytoplasm. The catalysed reaction is tRNA(Met) + L-methionine + ATP = L-methionyl-tRNA(Met) + AMP + diphosphate. This chain is Probable methionine--tRNA ligase, cytoplasmic (rar1), found in Schizosaccharomyces pombe (strain 972 / ATCC 24843) (Fission yeast).